Consider the following 506-residue polypeptide: ATP synthase subunit alpha (506 aa).

Glycine 170–threonine 177 contributes to the ATP binding site.

The protein belongs to the ATPase alpha/beta chains family. In terms of assembly, F-type ATPases have 2 components, CF(1) - the catalytic core - and CF(0) - the membrane proton channel. CF(1) has five subunits: alpha(3), beta(3), gamma(1), delta(1), epsilon(1). CF(0) has four main subunits: a(1), b(1), b'(1) and c(9-12).

It is found in the cellular thylakoid membrane. It catalyses the reaction ATP + H2O + 4 H(+)(in) = ADP + phosphate + 5 H(+)(out). Produces ATP from ADP in the presence of a proton gradient across the membrane. The alpha chain is a regulatory subunit. The polypeptide is ATP synthase subunit alpha (Parasynechococcus marenigrum (strain WH8102)).